Consider the following 636-residue polypeptide: TNFAIP3-interacting protein 1 (636 aa).

Residues 20-73 (EASAAFERLVKENSRLKEKMQGIKMLGELLEESQMEATRLRQKAEELVKDNELL) adopt a coiled-coil conformation. A compositionally biased stretch (basic and acidic residues) spans 61-71 (QKAEELVKDNE). Disordered stretches follow at residues 61 to 151 (QKAE…GPLP) and 252 to 283 (MSNG…QQQA). Residue Ser-77 is modified to Phosphoserine. The interval 94–412 (SNVTASPTAP…SPLTRQREYQ (319 aa)) is interaction with Nef. The segment covering 131–142 (EEQNSPESSSHA) has biased composition (polar residues). A coiled-coil region spans residues 196-258 (SKVHKNEQRT…KLLMSNGNKE (63 aa)). A Phosphoserine modification is found at Ser-284. Residues 294 to 535 (VALGAAEKKV…RKAKASGERY (242 aa)) are a coiled coil. The segment at 351–367 (DLEAEREQKQRDFDRKL) is interaction with Shigella flexneri ipah9.8. Ser-403 carries the post-translational modification Phosphoserine. The required for inhibitory activity of TNF-induced NF-kappa-B activation stretch occupies residues 431-588 (TPPSSPPTAF…MEHPPPLPNS (158 aa)). Phosphothreonine is present on Thr-438. Residue Ser-442 is modified to Phosphoserine. The tract at residues 452 to 510 (KQELVTQNELLKQQVKIFEEDFQRERSDRERMNEEKEELKKQVEKLQAQVTLSNAQLKA) is ubiquitin-binding domain (UBD). Positions 524-530 (QKRKAKA) match the Nuclear localization signal motif. Tyr-552 bears the Phosphotyrosine mark. Position 571 is an asymmetric dimethylarginine (Arg-571). Arg-599 bears the Asymmetric dimethylarginine; alternate mark. Arg-599 is modified (omega-N-methylarginine; alternate). Positions 603 to 636 (GGVRNPNQSSQVMDPPTARPTEPESPKNDREGPQ) are disordered. Positions 623 to 636 (TEPESPKNDREGPQ) are enriched in basic and acidic residues. Position 627 is a phosphoserine (Ser-627).

As to quaternary structure, interacts with TNFAIP3 and IKBKG (polyubiquitinated); facilitates TNFAIP3-mediated de-ubiquitination of NEMO/IKBKG. Interacts with polyubiquitin. Interacts with MAPK1, SELPLG and PIK3CD. Interacts with IRAK1 (polyubiquitinated). Interacts with MYD88; the interaction is indicative for participation in an activated TLR-signaling complex. Interacts with HIV-1 matrix protein. Interacts with TAX1BP1. In terms of assembly, (Microbial infection) Interacts with Shigella flexneri ipah9.8; the interaction promotes polyubiquitination of IKBKG. Phosphorylation at Tyr-552 by SRC-family kinases recruits phosphoinositide-3-kinase (PI3K) PIK3CD:p85 heterodimer which results in integrin activation and leukocyte adhesion to activated endothelium during inflammation. As to expression, ubiquitous. Strongly expressed in peripheral blood lymphocytes, spleen and skeletal muscle, and is weakly expressed in the brain. In peripheral blood mononucleocytes, isoform 4 is mainly expressed and isoform 1 and isoform 7 are almost not expressed. Expression of isoform 1 and isoform 7 increases in leukemic cells.

The protein localises to the cytoplasm. Its subcellular location is the nucleus. Inhibits NF-kappa-B activation and TNF-induced NF-kappa-B-dependent gene expression by regulating TAX1BP1 and A20/TNFAIP3-mediated deubiquitination of IKBKG; proposed to link A20/TNFAIP3 to ubiquitinated IKBKG. Involved in regulation of EGF-induced ERK1/ERK2 signaling pathway; blocks MAPK3/MAPK1 nuclear translocation and MAPK1-dependent transcription. Increases cell surface CD4(T4) antigen expression. Involved in the anti-inflammatory response of macrophages and positively regulates TLR-induced activation of CEBPB. Involved in the prevention of autoimmunity; this function implicates binding to polyubiquitin. Involved in leukocyte integrin activation during inflammation; this function is mediated by association with SELPLG and dependent on phosphorylation by SRC-family kinases. Interacts with HIV-1 matrix protein and is packaged into virions and overexpression can inhibit viral replication. May regulate matrix nuclear localization, both nuclear import of PIC (Preintegration complex) and export of GAG polyprotein and viral genomic RNA during virion production. In case of infection, promotes association of IKBKG with Shigella flexneri E3 ubiquitin-protein ligase ipah9.8 p which in turn promotes polyubiquitination of IKBKG leading to its proteasome-dependent degradation and thus is perturbing NF-kappa-B activation during bacterial infection. This chain is TNFAIP3-interacting protein 1 (TNIP1), found in Homo sapiens (Human).